A 475-amino-acid chain; its full sequence is Aspartyl/glutamyl-tRNA(Asn/Gln) amidotransferase subunit B (475 aa).

Belongs to the GatB/GatE family. GatB subfamily. As to quaternary structure, heterotrimer of A, B and C subunits.

The catalysed reaction is L-glutamyl-tRNA(Gln) + L-glutamine + ATP + H2O = L-glutaminyl-tRNA(Gln) + L-glutamate + ADP + phosphate + H(+). It carries out the reaction L-aspartyl-tRNA(Asn) + L-glutamine + ATP + H2O = L-asparaginyl-tRNA(Asn) + L-glutamate + ADP + phosphate + 2 H(+). In terms of biological role, allows the formation of correctly charged Asn-tRNA(Asn) or Gln-tRNA(Gln) through the transamidation of misacylated Asp-tRNA(Asn) or Glu-tRNA(Gln) in organisms which lack either or both of asparaginyl-tRNA or glutaminyl-tRNA synthetases. The reaction takes place in the presence of glutamine and ATP through an activated phospho-Asp-tRNA(Asn) or phospho-Glu-tRNA(Gln). This is Aspartyl/glutamyl-tRNA(Asn/Gln) amidotransferase subunit B from Pediococcus pentosaceus (strain ATCC 25745 / CCUG 21536 / LMG 10740 / 183-1w).